We begin with the raw amino-acid sequence, 154 residues long: Myoglobin (154 aa).

One can recognise a Globin domain in the interval 2–148 (GLSDGEWQLV…FRNDIAAKYK (147 aa)). Ser4 is subject to Phosphoserine. His65 is a nitrite binding site. His65 is a binding site for O2. Thr68 bears the Phosphothreonine mark. A heme b-binding site is contributed by His94.

It belongs to the globin family. As to quaternary structure, monomeric.

The protein localises to the cytoplasm. It localises to the sarcoplasm. The catalysed reaction is Fe(III)-heme b-[protein] + nitric oxide + H2O = Fe(II)-heme b-[protein] + nitrite + 2 H(+). It catalyses the reaction H2O2 + AH2 = A + 2 H2O. In terms of biological role, monomeric heme protein which primary function is to store oxygen and facilitate its diffusion within muscle tissues. Reversibly binds oxygen through a pentacoordinated heme iron and enables its timely and efficient release as needed during periods of heightened demand. Depending on the oxidative conditions of tissues and cells, and in addition to its ability to bind oxygen, it also has a nitrite reductase activity whereby it regulates the production of bioactive nitric oxide. Under stress conditions, like hypoxia and anoxia, it also protects cells against reactive oxygen species thanks to its pseudoperoxidase activity. In Spalax ehrenbergi (Middle East blind mole rat), this protein is Myoglobin (MB).